The sequence spans 228 residues: Putative adhesin RBE_1271 (228 aa).

The first 22 residues, Met1–Ala22, serve as a signal peptide directing secretion.

This chain is Putative adhesin RBE_1271, found in Rickettsia bellii (strain RML369-C).